Here is a 246-residue protein sequence, read N- to C-terminus: MIKSFFAALSFISRLPVPARLSQGLEIEQYQRSIVTFPLVGLLLGAIAGAVALLLQPWCGVPLAALFGVLALALLTGGFHLDGLADTCDGIFSARTRDRMLEIMRDSRLGTHGGLALIFVLVAKVLVIGELLLRDTHPIAALAAACAVGRGMAVLLMYRHRYAREKGLGNLFIGKVSLQQTLVTMAMGVALATVLLGLQGLRAALITLVLIWGLGWALKRTLGGQTGDTLGAAIELGELLFLLALL.

A run of 6 helical transmembrane segments spans residues 34-54, 59-79, 113-133, 138-158, 171-191, and 194-214; these read IVTF…VALL, CGVP…TGGF, GGLA…ELLL, PIAA…LLMY, LFIG…GVAL, and VLLG…IWGL.

Belongs to the CobS family. Mg(2+) serves as cofactor.

Its subcellular location is the cell inner membrane. It carries out the reaction alpha-ribazole + adenosylcob(III)inamide-GDP = adenosylcob(III)alamin + GMP + H(+). The catalysed reaction is alpha-ribazole 5'-phosphate + adenosylcob(III)inamide-GDP = adenosylcob(III)alamin 5'-phosphate + GMP + H(+). It functions in the pathway cofactor biosynthesis; adenosylcobalamin biosynthesis; adenosylcobalamin from cob(II)yrinate a,c-diamide: step 7/7. Its function is as follows. Joins adenosylcobinamide-GDP and alpha-ribazole to generate adenosylcobalamin (Ado-cobalamin). Also synthesizes adenosylcobalamin 5'-phosphate from adenosylcobinamide-GDP and alpha-ribazole 5'-phosphate. The chain is Adenosylcobinamide-GDP ribazoletransferase from Klebsiella pneumoniae (strain 342).